Reading from the N-terminus, the 443-residue chain is 3-phosphoshikimate 1-carboxyvinyltransferase (443 aa).

Lys-25, Ser-26, and Arg-30 together coordinate 3-phosphoshikimate. Phosphoenolpyruvate is bound at residue Lys-25. Residues Gly-117 and Arg-145 each contribute to the phosphoenolpyruvate site. Residues Ser-188, Ser-189, Gln-190, Ser-217, Glu-331, and His-358 each contribute to the 3-phosphoshikimate site. Residue Gln-190 participates in phosphoenolpyruvate binding. Glu-331 (proton acceptor) is an active-site residue. Residues Arg-362, Arg-404, and Lys-428 each contribute to the phosphoenolpyruvate site.

The protein belongs to the EPSP synthase family. As to quaternary structure, monomer.

It localises to the cytoplasm. It catalyses the reaction 3-phosphoshikimate + phosphoenolpyruvate = 5-O-(1-carboxyvinyl)-3-phosphoshikimate + phosphate. It participates in metabolic intermediate biosynthesis; chorismate biosynthesis; chorismate from D-erythrose 4-phosphate and phosphoenolpyruvate: step 6/7. In terms of biological role, catalyzes the transfer of the enolpyruvyl moiety of phosphoenolpyruvate (PEP) to the 5-hydroxyl of shikimate-3-phosphate (S3P) to produce enolpyruvyl shikimate-3-phosphate and inorganic phosphate. This Tropheryma whipplei (strain TW08/27) (Whipple's bacillus) protein is 3-phosphoshikimate 1-carboxyvinyltransferase.